We begin with the raw amino-acid sequence, 306 residues long: Ciliary microtubule inner protein 2B (306 aa).

The disordered stretch occupies residues 61 to 92 (QSNPFPPPRDHSFDGGSQELGGRRQHPGDPNL).

Belongs to the CIMIP2 family. In terms of tissue distribution, expressed in airway epithelial cells.

The protein localises to the cytoplasm. Its subcellular location is the cytoskeleton. It localises to the cilium axoneme. Functionally, microtubule inner protein (MIP) part of the dynein-decorated doublet microtubules (DMTs) in cilia axoneme, which is required for motile cilia beating. This is Ciliary microtubule inner protein 2B (cimip2b) from Xenopus tropicalis (Western clawed frog).